The primary structure comprises 301 residues: MSEDIRRGPGRPPKKRVVPNFERKGILEKPVRPQSRLEFSYDNPLIFKNLFIYFKNLKSKNILVRCTPTEITFFSRDQSQASFVIATIDGKNVNHYYASDVFWLGINRELVEKMFNSIDRSFLKITIVHRYDKPETLYFIFTDFDIDKECTYQITVSEPELDMDLIEMEKSISEERLKNYPLRWEFTSKQLKKTFSDLSNYTELVTIEKLGGDTPLHLYFQKFNSISYHEMYKSSNKINLTSTIPKSQVFQINVKIAHIKSLASAMVTDKIRILCEENGNLIFQSEMDALMLNTITMNNMI.

Belongs to the asfivirus E301R family. As to quaternary structure, interacts with host IRF3.

Plays a role in the inhibition of host innate immune system by acting as a negatively regulator of type I interferon production. Mechanistically, interacts with and prevents host IRF3 nuclear localization to inhibit its transcriptional activity. This is an uncharacterized protein from Ornithodoros (relapsing fever ticks).